Consider the following 437-residue polypeptide: Enolase (437 aa).

Residue Gln-163 participates in (2R)-2-phosphoglycerate binding. The active-site Proton donor is Glu-205. Mg(2+)-binding residues include Asp-242, Glu-285, and Asp-312. Positions 337, 366, 367, and 388 each coordinate (2R)-2-phosphoglycerate. The active-site Proton acceptor is the Lys-337.

It belongs to the enolase family. The cofactor is Mg(2+).

It localises to the cytoplasm. Its subcellular location is the secreted. The protein resides in the cell surface. It carries out the reaction (2R)-2-phosphoglycerate = phosphoenolpyruvate + H2O. It participates in carbohydrate degradation; glycolysis; pyruvate from D-glyceraldehyde 3-phosphate: step 4/5. Its function is as follows. Catalyzes the reversible conversion of 2-phosphoglycerate (2-PG) into phosphoenolpyruvate (PEP). It is essential for the degradation of carbohydrates via glycolysis. The protein is Enolase of Nitratidesulfovibrio vulgaris (strain DP4) (Desulfovibrio vulgaris).